The primary structure comprises 436 residues: Protein FAM83A (436 aa).

A DUF1669 region spans residues 1–298 (MSRSRHVGKI…LYASSKPLMG (298 aa)). Residues 73–95 (AQAKEPPDAPDSAGGAESGPRGL) form a disordered region. Phosphoserine occurs at positions 301, 329, 350, and 359. The disordered stretch occupies residues 302–371 (PRLVAPFQPN…APIPPTVPRL (70 aa)). Positions 321 to 349 (LSGTSDSASDRTSSNPFSSLSTGSNAHNQ) are enriched in polar residues. A compositionally biased stretch (low complexity) spans 350-359 (SLSTSSGPSS).

The protein belongs to the FAM83 family. As to quaternary structure, directly interacts (via DUF1669) with casein kinase isoforms CSNK1A1, CSNK1A1L, CSNK1D and CSNK1E. In terms of processing, may be phosphorylated upon EGFR activation. As to expression, widely expressed, with relatively higher expression levels in adipose tissues, especially in epididymal and inguinal white adipose tissue (at protein level).

The protein localises to the cytoplasm. It localises to the mitochondrion. Functionally, involved in mitochondrial maintenance during adipogenesis. May be acting by playing a role in the maintenance of normal mitochondrial function. In Mus musculus (Mouse), this protein is Protein FAM83A.